A 241-amino-acid chain; its full sequence is MSEEEAHKTVEVDDVGVQLDEGDEEDLLEYDDELVEEQPSDARIRNVAETLMKSELPKVTVEYKDTTFLLFTSDDKNESNNPIICENAALYQRPMGEFMESIRKFMGNRFGRLAFATKELVLQLKSLDLTLFEDNVYNNHISFSDVYTIFKILKERSESNFETDIPTHLAIELSTRPRFVSRYNALVELTESSATLKNIKPFSNDETHPLIVDDNDQYTHQNTSEVIVMDIDDDVGEDSED.

The protein belongs to the RMR1 family. In terms of processing, sumoylated.

The protein resides in the cytoplasm. Its subcellular location is the nucleus. In terms of biological role, required for normal levels of gene conversion events during meiosis. The chain is Reduced meiotic recombination protein 1 (RMR1) from Saccharomyces cerevisiae (strain ATCC 204508 / S288c) (Baker's yeast).